The sequence spans 462 residues: Proline--tRNA ligase (462 aa).

This sequence belongs to the class-II aminoacyl-tRNA synthetase family. ProS type 3 subfamily. In terms of assembly, homodimer.

It localises to the cytoplasm. It carries out the reaction tRNA(Pro) + L-proline + ATP = L-prolyl-tRNA(Pro) + AMP + diphosphate. In terms of biological role, catalyzes the attachment of proline to tRNA(Pro) in a two-step reaction: proline is first activated by ATP to form Pro-AMP and then transferred to the acceptor end of tRNA(Pro). This is Proline--tRNA ligase from Thermoplasma volcanium (strain ATCC 51530 / DSM 4299 / JCM 9571 / NBRC 15438 / GSS1).